A 186-amino-acid polypeptide reads, in one-letter code: Casparian strip membrane protein 3 (186 aa).

Residues methionine 1–serine 26 are Cytoplasmic-facing. Residues isoleucine 27 to methionine 47 traverse the membrane as a helical segment. At glycine 48–arginine 74 the chain is on the extracellular side. The chain crosses the membrane as a helical span at residues phenylalanine 75–isoleucine 95. Topologically, residues leucine 96–arginine 107 are cytoplasmic. The helical transmembrane segment at valine 108 to alanine 128 threads the bilayer. Over alanine 129–serine 161 the chain is Extracellular. A helical transmembrane segment spans residues leucine 162–valine 182. Topologically, residues leucine 183 to arginine 186 are cytoplasmic.

It belongs to the Casparian strip membrane proteins (CASP) family. Homodimer and heterodimers.

Its subcellular location is the cell membrane. In terms of biological role, regulates membrane-cell wall junctions and localized cell wall deposition. Required for establishment of the Casparian strip membrane domain (CSD) and the subsequent formation of Casparian strips, a cell wall modification of the root endodermis that determines an apoplastic barrier between the intraorganismal apoplasm and the extraorganismal apoplasm and prevents lateral diffusion. The chain is Casparian strip membrane protein 3 from Medicago truncatula (Barrel medic).